The sequence spans 1405 residues: Tonsoku-like protein (1405 aa).

7 TPR repeats span residues 23 to 56, 63 to 96, 163 to 196, 203 to 237, 245 to 278, 314 to 347, and 355 to 388; these read AVSCNQLGDFYNQQGKYTDAVREYVQEAQIYASM, AKAKRMVGEMYTLLCDYDAAKDHINDYLKIAKRL, ARCYLNIGVVKEHMEAFQESIEYIDKAIKISKTH, HLCYISMSLLYICKKNDATAALRFCNMALEVAKRF, CETLITKAEILIKAGDFASAKQILTKAYKKNTPD, KGLYEKLGDGCCHLMNYEKALTYYQKMLENAELN, and VPIYVSLYQTYRDNGQFDKALEYLWKEFELNQDA. One copy of the LRR 1 repeat lies at 153–181; that stretch reads ISKLEQLDMQARCYLNIGVVKEHMEAFQE. The LRR 2 repeat unit spans residues 439–465; sequence MVRLRRLMLKHNMQVLVENLEADATAK. Residues 465–535 are disordered; that stretch reads KGIDLDQEES…RGNRTLVIKK (71 aa). Residues 469-483 are compositionally biased toward acidic residues; the sequence is LDQEESVGDDEEESD. 3 ANK repeats span residues 538 to 567, 571 to 600, and 609 to 638; these read KGETQLHQACISGNLELVRRLIDQGHTVNV, AGWLPLHEACNHGYREIVELLLDKGAASAI, and DGITPLFDACSNGFLDVAELLLDRGADATV. Disordered regions lie at residues 695–753, 806–827, and 841–880; these read FNAK…KEYR, KRINSGDLSRRTSKENFQDTAL, and TPENEYSQRQKQMRKLTLSRSSSMSSNHSSSATSSRKKHQ. A phosphoserine mark is found at Ser-707 and Ser-709. The segment covering 813–822 has biased composition (basic and acidic residues); that stretch reads LSRRTSKENF. The span at 841–850 shows a compositional bias: polar residues; it reads TPENEYSQRQ. Over residues 859 to 874 the composition is skewed to low complexity; it reads SRSSSMSSNHSSSATS. Phosphoserine occurs at positions 893, 895, 899, and 902. LRR repeat units follow at residues 1085-1108, 1113-1137, 1143-1166, 1186-1211, 1287-1311, and 1333-1357; these read QARLTVLDLSCNFIGNEGCQQLAK, LLQLKALRLQCNAIGSHGLEALLCG, LELLEELNLNQNPLGNASVRILSK, LTELQDFDLGFNKLTRFDISFNQLTQ, AKQLQMLDISDNSNLSGTTLGYILD, and LQKLEQLKQLPRRLELTVDEQVFSM.

This sequence belongs to the Tonsoku family.

The protein resides in the nucleus. It is found in the nucleoplasm. It localises to the chromosome. Functionally, histone reader involved in homologous recombination-mediated repair of double-strand breaks (DSBs) at stalled or collapsed replication forks. Specifically recognizes and binds histone H3.1. In Drosophila melanogaster (Fruit fly), this protein is Tonsoku-like protein.